The sequence spans 201 residues: 3-isopropylmalate dehydratase small subunit (201 aa).

The protein belongs to the LeuD family. LeuD type 1 subfamily. Heterodimer of LeuC and LeuD.

The catalysed reaction is (2R,3S)-3-isopropylmalate = (2S)-2-isopropylmalate. It participates in amino-acid biosynthesis; L-leucine biosynthesis; L-leucine from 3-methyl-2-oxobutanoate: step 2/4. Its function is as follows. Catalyzes the isomerization between 2-isopropylmalate and 3-isopropylmalate, via the formation of 2-isopropylmaleate. In Chloroflexus aurantiacus (strain ATCC 29366 / DSM 635 / J-10-fl), this protein is 3-isopropylmalate dehydratase small subunit.